Consider the following 338-residue polypeptide: Mitoferrin-1 (338 aa).

A disordered region spans residues M1 to E37. Solcar repeat units lie at residues A43–T131, N141–Q225, and Y232–I326. Transmembrane regions (helical) follow at residues V45 to Y64, G106 to Y125, H143 to N162, S200 to Y219, P234 to T253, and G301 to Y320.

Belongs to the mitochondrial carrier (TC 2.A.29) family. In terms of assembly, interacts with ACB10; this interaction stabilizes SLC25A37 and enhances the function of SLC25A37 to import mitochondrial iron during erythroid differentiation. In terms of tissue distribution, highly expressed in hematopoietic organs, fetal liver, bone marrow and spleen.

It is found in the mitochondrion inner membrane. It catalyses the reaction Fe(2+)(in) = Fe(2+)(out). Mitochondrial iron transporter that specifically mediates iron uptake in developing erythroid cells, thereby playing an essential role in heme biosynthesis. The polypeptide is Mitoferrin-1 (Slc25a37) (Mus musculus (Mouse)).